Here is a 429-residue protein sequence, read N- to C-terminus: Ribosomal RNA small subunit methyltransferase B (429 aa).

S-adenosyl-L-methionine-binding positions include cysteine 254–lysine 260, aspartate 277, aspartate 303, and aspartate 322. Residue cysteine 375 is the Nucleophile of the active site. The interval alanine 397–aspartate 419 is disordered. The segment covering glutamate 400 to leucine 412 has biased composition (polar residues).

This sequence belongs to the class I-like SAM-binding methyltransferase superfamily. RsmB/NOP family.

Its subcellular location is the cytoplasm. The enzyme catalyses cytidine(967) in 16S rRNA + S-adenosyl-L-methionine = 5-methylcytidine(967) in 16S rRNA + S-adenosyl-L-homocysteine + H(+). Functionally, specifically methylates the cytosine at position 967 (m5C967) of 16S rRNA. This chain is Ribosomal RNA small subunit methyltransferase B, found in Salmonella newport (strain SL254).